The following is a 471-amino-acid chain: ATP synthase subunit beta (471 aa).

156-163 is a binding site for ATP; sequence GGAGVGKT.

The protein belongs to the ATPase alpha/beta chains family. In terms of assembly, F-type ATPases have 2 components, CF(1) - the catalytic core - and CF(0) - the membrane proton channel. CF(1) has five subunits: alpha(3), beta(3), gamma(1), delta(1), epsilon(1). CF(0) has three main subunits: a(1), b(2) and c(9-12). The alpha and beta chains form an alternating ring which encloses part of the gamma chain. CF(1) is attached to CF(0) by a central stalk formed by the gamma and epsilon chains, while a peripheral stalk is formed by the delta and b chains.

Its subcellular location is the cell membrane. The enzyme catalyses ATP + H2O + 4 H(+)(in) = ADP + phosphate + 5 H(+)(out). In terms of biological role, produces ATP from ADP in the presence of a proton gradient across the membrane. The catalytic sites are hosted primarily by the beta subunits. This Lawsonia intracellularis (strain PHE/MN1-00) protein is ATP synthase subunit beta.